A 172-amino-acid chain; its full sequence is Translationally-controlled tumor protein (172 aa).

The TCTP domain maps to 1 to 172 (MIIYRDLISH…FKDGLEMEKC (172 aa)). S46 is subject to Phosphoserine; by PLK1. At S53 the chain carries Phosphoserine. S64 is subject to Phosphoserine; by PLK1. The required for reduction of TSC22D1 protein stability stretch occupies residues 70 to 172 (VDIVMNHHLQ…FKDGLEMEKC (103 aa)).

Belongs to the TCTP family. As to quaternary structure, homodimer. Interacts with STEAP3. Interacts with TSC22D1; interaction results in the destabilization of TSC22D1 protein. As to expression, found in several healthy and tumoral cells including erythrocytes, hepatocytes, macrophages, platelets, keratinocytes, erythroleukemia cells, gliomas, melanomas, hepatoblastomas, and lymphomas. It cannot be detected in kidney and renal cell carcinoma (RCC). Expressed in placenta and prostate.

The protein resides in the cytoplasm. Functionally, involved in calcium binding and microtubule stabilization. Acts as a negative regulator of TSC22D1-mediated apoptosis, via interaction with and destabilization of TSC22D1 protein. This Homo sapiens (Human) protein is Translationally-controlled tumor protein (TPT1).